Consider the following 408-residue polypeptide: UDP-glucose 4-epimerase 2 (408 aa).

13-44 (TVLVTGGAGYIGSHAVLQLLLAGFRAVVVDNL) is an NAD(+) binding site. A substrate-binding site is contributed by Ser138. Tyr162 functions as the Proton acceptor in the catalytic mechanism. The disordered stretch occupies residues 369–408 (GSPKQNGHCTNGFSESTRHNGHNGYGLVDSAKHNGNGHFH). Over residues 370–383 (SPKQNGHCTNGFSE) the composition is skewed to polar residues.

It belongs to the NAD(P)-dependent epimerase/dehydratase family. It depends on NAD(+) as a cofactor.

It catalyses the reaction UDP-alpha-D-glucose = UDP-alpha-D-galactose. It functions in the pathway carbohydrate metabolism; galactose metabolism. In terms of biological role, catalyzes the interconversion between UDP-glucose and UDP-galactose. In Oryza sativa subsp. japonica (Rice), this protein is UDP-glucose 4-epimerase 2 (UGE-2).